Consider the following 171-residue polypeptide: Peptide methionine sulfoxide reductase MsrA (171 aa).

Cys13 is an active-site residue.

The protein belongs to the MsrA Met sulfoxide reductase family.

The enzyme catalyses L-methionyl-[protein] + [thioredoxin]-disulfide + H2O = L-methionyl-(S)-S-oxide-[protein] + [thioredoxin]-dithiol. It catalyses the reaction [thioredoxin]-disulfide + L-methionine + H2O = L-methionine (S)-S-oxide + [thioredoxin]-dithiol. Has an important function as a repair enzyme for proteins that have been inactivated by oxidation. Catalyzes the reversible oxidation-reduction of methionine sulfoxide in proteins to methionine. The chain is Peptide methionine sulfoxide reductase MsrA from Mycobacterium sp. (strain JLS).